The sequence spans 423 residues: Galactosylceramide sulfotransferase (423 aa).

The Cytoplasmic portion of the chain corresponds to methionine 1–lysine 14. The helical; Signal-anchor for type II membrane protein transmembrane segment at glycine 15–proline 35 threads the bilayer. Residues proline 36–tryptophan 423 lie on the Lumenal side of the membrane. The tract at residues glycine 48–glycine 70 is disordered. N-linked (GlcNAc...) asparagine glycans are attached at residues asparagine 66, asparagine 156, and asparagine 312.

This sequence belongs to the galactose-3-O-sulfotransferase family.

It is found in the golgi apparatus membrane. It catalyses the reaction a beta-D-galactosyl-(1&lt;-&gt;1')-N-acylsphing-4-enine + 3'-phosphoadenylyl sulfate = an N-acyl-1-beta-D-(3-O-sulfo)-galactosyl-sphing-4-enine + adenosine 3',5'-bisphosphate + H(+). The enzyme catalyses a 1-O-alkyl-2-acyl-3-O-(beta-D-galactosyl)-sn-glycerol + 3'-phosphoadenylyl sulfate = a 1-O-alkyl-2-acyl-3-(beta-D-3-sulfogalactosyl)-sn-glycerol + adenosine 3',5'-bisphosphate + H(+). The catalysed reaction is a beta-D-Gal-(1&lt;-&gt;1')-ceramide + 3'-phosphoadenylyl sulfate = 1-(3-O-sulfo-beta-D-galactosyl)-ceramide + adenosine 3',5'-bisphosphate + H(+). It carries out the reaction a 1,2-diacyl-3-O-(beta-D-galactosyl)-sn-glycerol + 3'-phosphoadenylyl sulfate = 1,2-diacyl-3-(3-O-sulfo-beta-D-galactosyl)-sn-glycerol + adenosine 3',5'-bisphosphate + H(+). It catalyses the reaction a beta-D-Gal-(1-&gt;4)-beta-D-Glc-(1&lt;-&gt;1)-Cer(d18:1(4E)) + 3'-phosphoadenylyl sulfate = beta-D-3-sulfogalactosyl-(1-&gt;4)-beta-D-glucosyl-(1&lt;-&gt;1')-N-acylsphing-4-enine + adenosine 3',5'-bisphosphate + H(+). Its pathway is lipid metabolism; sphingolipid metabolism. Catalyzes the transfer of a sulfate group to position 3 of non-reducing beta-galactosyl residues in glycerolipids and sphingolipids, therefore participates in the biosynthesis of sulfoglycolipids. Catalyzes the synthesis of galactosylceramide sulfate (sulfatide), a major lipid component of the myelin sheath and of monogalactosylalkylacylglycerol sulfate (seminolipid), present in spermatocytes. Seems to prefer beta-glycosides at the non-reducing termini of sugar chains attached to a lipid moiety. Also acts on lactosylceramide, galactosyl 1-alkyl-2-sn-glycerol and galactosyl diacylglycerol (in vitro). The sequence is that of Galactosylceramide sulfotransferase from Bos taurus (Bovine).